A 393-amino-acid chain; its full sequence is Bifunctional chrysanthemol synthase, chloroplastic (393 aa).

The span at 1 to 18 (MACSSSLSSKWASWGASS) shows a compositional bias: low complexity. Positions 1–22 (MACSSSLSSKWASWGASSRPHP) are disordered. Residues 1–53 (MACSSSLSSKWASWGASSRPHPSVQPFVTRKNVVRYHKPTSELSYSPLTTTLS) constitute a chloroplast transit peptide. The dimethylallyl diphosphate site is built by K99, R102, and Q137. Mg(2+) contacts are provided by D144 and D148. 7 residues coordinate dimethylallyl diphosphate: R153, R154, K241, Q280, D287, K297, and K306.

The protein belongs to the FPP/GGPP synthase family. Requires Mg(2+) as cofactor. In terms of tissue distribution, restricted to glandular trichomes during achene maturation. Expressed in flowers and in both ray and disk florets.

The protein resides in the plastid. Its subcellular location is the chloroplast. The catalysed reaction is 2 dimethylallyl diphosphate = (R,R)-chrysanthemyl diphosphate + diphosphate. It carries out the reaction (R,R)-chrysanthemyl diphosphate + H2O = (R,R)-chrysanthemol + diphosphate. The enzyme catalyses (R)-lavandulyl diphosphate + H2O = (R)-lavandulol + diphosphate. The protein operates within isoprenoid biosynthesis. Its function is as follows. Component of the monoterpenoid pyrethrins biosynthesis; pyrethrins are widely used plant-derived pesticide. Catalyzes the condensation of two molecules of dimethylallyl diphosphate to produce chrysanthemyl diphosphate (CPP), a monoterpene with a non-head-to-tail or irregular c1'-2-3 linkage between isoprenoid units. In a second step, hydrolyzes the diphosphate moiety of CPP to form chrysanthemol. With a lower efficiency, can also converts dimethylallyl diphosphate into lavandulyl diphosphate (LPP), and subsequently LPP into lavandulol. The chain is Bifunctional chrysanthemol synthase, chloroplastic from Tanacetum cinerariifolium (Dalmatian daisy).